Consider the following 203-residue polypeptide: Probable nicotinate-nucleotide adenylyltransferase (203 aa).

It belongs to the NadD family.

It catalyses the reaction nicotinate beta-D-ribonucleotide + ATP + H(+) = deamido-NAD(+) + diphosphate. It participates in cofactor biosynthesis; NAD(+) biosynthesis; deamido-NAD(+) from nicotinate D-ribonucleotide: step 1/1. Its function is as follows. Catalyzes the reversible adenylation of nicotinate mononucleotide (NaMN) to nicotinic acid adenine dinucleotide (NaAD). This is Probable nicotinate-nucleotide adenylyltransferase from Dictyoglomus turgidum (strain DSM 6724 / Z-1310).